Consider the following 234-residue polypeptide: Large ribosomal subunit protein uL1 (234 aa).

This sequence belongs to the universal ribosomal protein uL1 family. As to quaternary structure, part of the 50S ribosomal subunit.

Binds directly to 23S rRNA. The L1 stalk is quite mobile in the ribosome, and is involved in E site tRNA release. In terms of biological role, protein L1 is also a translational repressor protein, it controls the translation of the L11 operon by binding to its mRNA. This is Large ribosomal subunit protein uL1 from Tolumonas auensis (strain DSM 9187 / NBRC 110442 / TA 4).